Consider the following 105-residue polypeptide: TPR repeat-containing protein PA0015 (105 aa).

TPR repeat units lie at residues 17–50 (ALLR…DPKY) and 52–84 (AGWK…AATH).

The sequence is that of TPR repeat-containing protein PA0015 from Pseudomonas aeruginosa (strain ATCC 15692 / DSM 22644 / CIP 104116 / JCM 14847 / LMG 12228 / 1C / PRS 101 / PAO1).